Reading from the N-terminus, the 448-residue chain is N-succinylarginine dihydrolase (448 aa).

Substrate is bound by residues 19 to 28, asparagine 110, and 137 to 138; these read AGLSSGNIAS and HR. The active site involves glutamate 174. Arginine 216 is a binding site for substrate. Histidine 252 is a catalytic residue. Aspartate 254 and asparagine 366 together coordinate substrate. Cysteine 372 serves as the catalytic Nucleophile.

It belongs to the succinylarginine dihydrolase family. As to quaternary structure, homodimer.

The catalysed reaction is N(2)-succinyl-L-arginine + 2 H2O + 2 H(+) = N(2)-succinyl-L-ornithine + 2 NH4(+) + CO2. The protein operates within amino-acid degradation; L-arginine degradation via AST pathway; L-glutamate and succinate from L-arginine: step 2/5. Functionally, catalyzes the hydrolysis of N(2)-succinylarginine into N(2)-succinylornithine, ammonia and CO(2). The chain is N-succinylarginine dihydrolase from Legionella pneumophila (strain Corby).